The primary structure comprises 411 residues: Ornithine cyclodeaminase (411 aa).

10 residues coordinate NAD(+): Asn236, Ala237, Asp315, Thr347, Met348, Leu349, His350, Asp368, Asp391, and Val392.

The protein belongs to the AgrE/ArgZ ornithine cyclodeaminase family. It depends on NAD(+) as a cofactor.

The enzyme catalyses L-ornithine = L-proline + NH4(+). Its function is as follows. Catalyzes the conversion of ornithine to proline, with the release of ammonia. This chain is Ornithine cyclodeaminase, found in Methanothermobacter thermautotrophicus (strain ATCC 29096 / DSM 1053 / JCM 10044 / NBRC 100330 / Delta H) (Methanobacterium thermoautotrophicum).